We begin with the raw amino-acid sequence, 494 residues long: Ketol-acid reductoisomerase (NADP(+)) (494 aa).

In terms of domain architecture, KARI N-terminal Rossmann spans 14–208 (LDQLGRCRFM…GGHRAGVLES (195 aa)). NADP(+) is bound by residues 45 to 48 (CGAQ), arginine 68, arginine 76, serine 78, and 108 to 110 (DKQ). Residue histidine 132 is part of the active site. Glycine 158 provides a ligand contact to NADP(+). KARI C-terminal knotted domains lie at 209–344 (SFVA…NYPV) and 345–487 (TDVE…MTDM). Mg(2+)-binding residues include aspartate 217, glutamate 221, glutamate 389, and glutamate 393. Serine 414 provides a ligand contact to substrate.

The protein belongs to the ketol-acid reductoisomerase family. Mg(2+) serves as cofactor.

It carries out the reaction (2R)-2,3-dihydroxy-3-methylbutanoate + NADP(+) = (2S)-2-acetolactate + NADPH + H(+). It catalyses the reaction (2R,3R)-2,3-dihydroxy-3-methylpentanoate + NADP(+) = (S)-2-ethyl-2-hydroxy-3-oxobutanoate + NADPH + H(+). Its pathway is amino-acid biosynthesis; L-isoleucine biosynthesis; L-isoleucine from 2-oxobutanoate: step 2/4. It functions in the pathway amino-acid biosynthesis; L-valine biosynthesis; L-valine from pyruvate: step 2/4. Its function is as follows. Involved in the biosynthesis of branched-chain amino acids (BCAA). Catalyzes an alkyl-migration followed by a ketol-acid reduction of (S)-2-acetolactate (S2AL) to yield (R)-2,3-dihydroxy-isovalerate. In the isomerase reaction, S2AL is rearranged via a Mg-dependent methyl migration to produce 3-hydroxy-3-methyl-2-ketobutyrate (HMKB). In the reductase reaction, this 2-ketoacid undergoes a metal-dependent reduction by NADPH to yield (R)-2,3-dihydroxy-isovalerate. The polypeptide is Ketol-acid reductoisomerase (NADP(+)) (Photobacterium profundum (strain SS9)).